A 212-amino-acid polypeptide reads, in one-letter code: ATP-dependent Clp protease proteolytic subunit (212 aa).

S114 functions as the Nucleophile in the catalytic mechanism. H139 is a catalytic residue.

Belongs to the peptidase S14 family. As to quaternary structure, fourteen ClpP subunits assemble into 2 heptameric rings which stack back to back to give a disk-like structure with a central cavity, resembling the structure of eukaryotic proteasomes.

Its subcellular location is the cytoplasm. It catalyses the reaction Hydrolysis of proteins to small peptides in the presence of ATP and magnesium. alpha-casein is the usual test substrate. In the absence of ATP, only oligopeptides shorter than five residues are hydrolyzed (such as succinyl-Leu-Tyr-|-NHMec, and Leu-Tyr-Leu-|-Tyr-Trp, in which cleavage of the -Tyr-|-Leu- and -Tyr-|-Trp bonds also occurs).. Its function is as follows. Cleaves peptides in various proteins in a process that requires ATP hydrolysis. Has a chymotrypsin-like activity. Plays a major role in the degradation of misfolded proteins. This is ATP-dependent Clp protease proteolytic subunit from Laribacter hongkongensis (strain HLHK9).